Here is a 254-residue protein sequence, read N- to C-terminus: Triosephosphate isomerase (254 aa).

9-11 (NWK) serves as a coordination point for substrate. Residue H96 is the Electrophile of the active site. The active-site Proton acceptor is E169. Substrate is bound by residues G175, S215, and 236–237 (GG).

This sequence belongs to the triosephosphate isomerase family. As to quaternary structure, homodimer.

The protein resides in the cytoplasm. It carries out the reaction D-glyceraldehyde 3-phosphate = dihydroxyacetone phosphate. It functions in the pathway carbohydrate biosynthesis; gluconeogenesis. It participates in carbohydrate degradation; glycolysis; D-glyceraldehyde 3-phosphate from glycerone phosphate: step 1/1. Functionally, involved in the gluconeogenesis. Catalyzes stereospecifically the conversion of dihydroxyacetone phosphate (DHAP) to D-glyceraldehyde-3-phosphate (G3P). This Borrelia duttonii (strain Ly) protein is Triosephosphate isomerase.